Consider the following 57-residue polypeptide: uncharacterized protein (57 aa).

The helical transmembrane segment at 34–54 threads the bilayer; it reads AALLDAAALVVIPGLLTAAAV.

Its subcellular location is the membrane. This is an uncharacterized protein from Dictyostelium discoideum (Social amoeba).